The chain runs to 172 residues: AIG2-like protein B (172 aa).

A substrate-binding site is contributed by 15–20; the sequence is YGSFQE. The Proton acceptor role is filled by E83. Over residues 146–165 the composition is skewed to basic and acidic residues; that stretch reads KRNPQGKGRDDFSNVLKEED. The segment at 146-172 is disordered; the sequence is KRNPQGKGRDDFSNVLKEEDPANAPSS.

Belongs to the gamma-glutamylcyclotransferase family. As to expression, expressed in flowerss, leaves, stems, seeds and roots.

It localises to the cell membrane. Functionally, putative gamma-glutamylcyclotransferase. The chain is AIG2-like protein B from Arabidopsis thaliana (Mouse-ear cress).